The sequence spans 219 residues: 2,3-bisphosphoglycerate-dependent phosphoglycerate mutase 2 (219 aa).

Substrate-binding positions include Arg-8–Asn-15, Thr-21–Gly-22, Arg-58, Glu-85–Tyr-88, Lys-96, Arg-112–Arg-113, and Gly-156–Asn-157. Residue His-9 is the Tele-phosphohistidine intermediate of the active site. Glu-85 (proton donor/acceptor) is an active-site residue.

This sequence belongs to the phosphoglycerate mutase family. BPG-dependent PGAM subfamily.

The catalysed reaction is (2R)-2-phosphoglycerate = (2R)-3-phosphoglycerate. Its pathway is carbohydrate degradation; glycolysis; pyruvate from D-glyceraldehyde 3-phosphate: step 3/5. In terms of biological role, catalyzes the interconversion of 2-phosphoglycerate and 3-phosphoglycerate. This chain is 2,3-bisphosphoglycerate-dependent phosphoglycerate mutase 2, found in Gloeobacter violaceus (strain ATCC 29082 / PCC 7421).